The following is a 125-amino-acid chain: MVLTDAEELRSPVITSDMSFFDLESNHSSDSVHLLCEKYTHKLPIESESQTTFRLAPTKQRLYRQSTLYVPLSLKQRVFLFTERVKSIWAGLPRCKPNKYFKVAFALAVLTPLAIWIFYIDFRVH.

A helical membrane pass occupies residues 100–120 (YFKVAFALAVLTPLAIWIFYI).

The protein resides in the membrane. This is an uncharacterized protein from Saccharomyces cerevisiae (strain ATCC 204508 / S288c) (Baker's yeast).